Consider the following 334-residue polypeptide: MRIVINGFGRIGRLVLRQILKRNSPIEVVAINDLVAGDLLTYLFKYDSTHGSFAPQATFSDGCLVMGERKVHFLAEKDVQKLPWKDLDVDVVVESTGLFVNRDDVAKHLDSGAKRVLITAPAKGDVPTFVMGVNHQQFDPADVIISNASCTTNCLAPLAKVLLDNFGIEEGLMTTVHAATATQSVVDGPSRKDWRGGRGAFQNIIPASTGAAKAVGLCLPELKGKLTGMAFRVPVADVSVVDLTVKLSSATTYEAICEAVKHAANTSMKNIMYYTEEAVVSSDFIGCEYSSVFDAQAGVALNDRFFKLVAWYDNEIGYATRIVDLLEYVQENSK.

Residues 10 to 11, Asp-33, Lys-77, and Thr-119 each bind NAD(+); that span reads RI. D-glyceraldehyde 3-phosphate is bound by residues 149–151, Thr-180, 209–210, and Arg-232; these read SCT and TG. The active-site Nucleophile is Cys-150. Asn-314 contacts NAD(+).

Belongs to the glyceraldehyde-3-phosphate dehydrogenase family. Homotetramer.

It is found in the cytoplasm. The enzyme catalyses D-glyceraldehyde 3-phosphate + phosphate + NAD(+) = (2R)-3-phospho-glyceroyl phosphate + NADH + H(+). Its pathway is carbohydrate degradation; glycolysis; pyruvate from D-glyceraldehyde 3-phosphate: step 1/5. Functionally, catalyzes the oxidative phosphorylation of glyceraldehyde 3-phosphate (G3P) to 1,3-bisphosphoglycerate (BPG) using the cofactor NAD. The first reaction step involves the formation of a hemiacetal intermediate between G3P and a cysteine residue, and this hemiacetal intermediate is then oxidized to a thioester, with concomitant reduction of NAD to NADH. The reduced NADH is then exchanged with the second NAD, and the thioester is attacked by a nucleophilic inorganic phosphate to produce BPG. This Chlamydia trachomatis serovar D (strain ATCC VR-885 / DSM 19411 / UW-3/Cx) protein is Glyceraldehyde-3-phosphate dehydrogenase (gap).